Reading from the N-terminus, the 427-residue chain is 3-phosphoshikimate 1-carboxyvinyltransferase (427 aa).

3-phosphoshikimate is bound by residues Lys22, Ser23, and Arg27. Lys22 is a phosphoenolpyruvate binding site. The phosphoenolpyruvate site is built by Gly93 and Arg122. Positions 167, 169, 315, and 342 each coordinate 3-phosphoshikimate. Gln169 contacts phosphoenolpyruvate. The active-site Proton acceptor is the Asp315. Phosphoenolpyruvate-binding residues include Arg346 and Arg387.

Belongs to the EPSP synthase family. Monomer.

The protein resides in the cytoplasm. The enzyme catalyses 3-phosphoshikimate + phosphoenolpyruvate = 5-O-(1-carboxyvinyl)-3-phosphoshikimate + phosphate. The protein operates within metabolic intermediate biosynthesis; chorismate biosynthesis; chorismate from D-erythrose 4-phosphate and phosphoenolpyruvate: step 6/7. Catalyzes the transfer of the enolpyruvyl moiety of phosphoenolpyruvate (PEP) to the 5-hydroxyl of shikimate-3-phosphate (S3P) to produce enolpyruvyl shikimate-3-phosphate and inorganic phosphate. This chain is 3-phosphoshikimate 1-carboxyvinyltransferase, found in Thermus thermophilus (strain ATCC 27634 / DSM 579 / HB8).